A 129-amino-acid polypeptide reads, in one-letter code: Large ribosomal subunit protein bL19 (129 aa).

Belongs to the bacterial ribosomal protein bL19 family.

In terms of biological role, this protein is located at the 30S-50S ribosomal subunit interface and may play a role in the structure and function of the aminoacyl-tRNA binding site. This is Large ribosomal subunit protein bL19 from Rhizorhabdus wittichii (strain DSM 6014 / CCUG 31198 / JCM 15750 / NBRC 105917 / EY 4224 / RW1) (Sphingomonas wittichii).